A 468-amino-acid polypeptide reads, in one-letter code: Hydroxymethylglutaryl-CoA synthase B (468 aa).

The active-site Proton donor/acceptor is Glu-85. Cys-119 (acyl-thioester intermediate) is an active-site residue. Residues Cys-119, Thr-161, Ser-211, His-250, Lys-259, Asn-327, and Ser-359 each coordinate (3S)-3-hydroxy-3-methylglutaryl-CoA. Residue His-250 is the Proton donor/acceptor of the active site.

This sequence belongs to the thiolase-like superfamily. HMG-CoA synthase family.

It catalyses the reaction acetoacetyl-CoA + acetyl-CoA + H2O = (3S)-3-hydroxy-3-methylglutaryl-CoA + CoA + H(+). Its pathway is metabolic intermediate biosynthesis; (R)-mevalonate biosynthesis; (R)-mevalonate from acetyl-CoA: step 2/3. Its function is as follows. Condenses acetyl-CoA with acetoacetyl-CoA to form HMG-CoA, which is the substrate for HMG-CoA reductase. This chain is Hydroxymethylglutaryl-CoA synthase B (hgsB), found in Dictyostelium discoideum (Social amoeba).